A 301-amino-acid polypeptide reads, in one-letter code: Diaminopimelate epimerase (301 aa).

Asn-15, Gln-47, and Asn-67 together coordinate substrate. Residue Cys-76 is the Proton donor of the active site. Residues Gly-77–Asn-78, Asn-163, Asn-197, and Glu-215–Arg-216 each bind substrate. Cys-224 functions as the Proton acceptor in the catalytic mechanism. Residue Gly-225 to Ser-226 coordinates substrate.

Belongs to the diaminopimelate epimerase family. In terms of assembly, homodimer.

It is found in the cytoplasm. It carries out the reaction (2S,6S)-2,6-diaminopimelate = meso-2,6-diaminopimelate. It participates in amino-acid biosynthesis; L-lysine biosynthesis via DAP pathway; DL-2,6-diaminopimelate from LL-2,6-diaminopimelate: step 1/1. Functionally, catalyzes the stereoinversion of LL-2,6-diaminopimelate (L,L-DAP) to meso-diaminopimelate (meso-DAP), a precursor of L-lysine and an essential component of the bacterial peptidoglycan. The protein is Diaminopimelate epimerase of Rhizobium rhizogenes (strain K84 / ATCC BAA-868) (Agrobacterium radiobacter).